The primary structure comprises 720 residues: Engulfment and cell motility protein 2 (720 aa).

Tyrosine 48 is subject to Phosphotyrosine. Positions 311 to 485 constitute an ELMO domain; that stretch reads AQRDIIFELR…VVREQITRAL (175 aa). Position 503 is a phosphoserine (serine 503). One can recognise a PH domain in the interval 553 to 674; that stretch reads SSFRKIGNRR…LLGKDMSSEL (122 aa). The SH3-binding signature appears at 700–707; that stretch reads PEAPPPIP. Tyrosine 717 is subject to Phosphotyrosine.

In terms of assembly, interacts with the SH3-domain of DOCK1 via its SH3-binding site. Probably part of a complex with DOCK1 and RAC1. Probably part of a complex with DOCK1 and CRK isoform CRK-II. Interacts with ARHGEF16, DOCK4 and EPHA2; mediates activation of RAC1 by EPHA2. Interacts with ADGRB3. Interacts with AUTS2; the interaction is direct. Widely expressed, with a higher expression in skeletal muscle, kidney and placenta.

The protein localises to the cytoplasm. It is found in the cytosol. It localises to the membrane. Involved in cytoskeletal rearrangements required for phagocytosis of apoptotic cells and cell motility. Acts in association with DOCK1 and CRK. Was initially proposed to be required in complex with DOCK1 to activate Rac Rho small GTPases. May enhance the guanine nucleotide exchange factor (GEF) activity of DOCK1. The polypeptide is Engulfment and cell motility protein 2 (ELMO2) (Homo sapiens (Human)).